The following is a 222-amino-acid chain: Phosphoribosylformylglycinamidine synthase subunit PurQ (222 aa).

The Glutamine amidotransferase type-1 domain occupies 3 to 222 (SAVIQLPGLN…LFESVLGRAA (220 aa)). Residue C86 is the Nucleophile of the active site. Residues H196 and E198 contribute to the active site.

As to quaternary structure, part of the FGAM synthase complex composed of 1 PurL, 1 PurQ and 2 PurS subunits.

The protein localises to the cytoplasm. The catalysed reaction is N(2)-formyl-N(1)-(5-phospho-beta-D-ribosyl)glycinamide + L-glutamine + ATP + H2O = 2-formamido-N(1)-(5-O-phospho-beta-D-ribosyl)acetamidine + L-glutamate + ADP + phosphate + H(+). It catalyses the reaction L-glutamine + H2O = L-glutamate + NH4(+). It functions in the pathway purine metabolism; IMP biosynthesis via de novo pathway; 5-amino-1-(5-phospho-D-ribosyl)imidazole from N(2)-formyl-N(1)-(5-phospho-D-ribosyl)glycinamide: step 1/2. Its function is as follows. Part of the phosphoribosylformylglycinamidine synthase complex involved in the purines biosynthetic pathway. Catalyzes the ATP-dependent conversion of formylglycinamide ribonucleotide (FGAR) and glutamine to yield formylglycinamidine ribonucleotide (FGAM) and glutamate. The FGAM synthase complex is composed of three subunits. PurQ produces an ammonia molecule by converting glutamine to glutamate. PurL transfers the ammonia molecule to FGAR to form FGAM in an ATP-dependent manner. PurS interacts with PurQ and PurL and is thought to assist in the transfer of the ammonia molecule from PurQ to PurL. In Chelativorans sp. (strain BNC1), this protein is Phosphoribosylformylglycinamidine synthase subunit PurQ.